A 314-amino-acid chain; its full sequence is tRNA uridine(34) hydroxylase (314 aa).

Positions 135–229 (SDPDTIVIDT…YLEEVPEEES (95 aa)) constitute a Rhodanese domain. Cys-189 serves as the catalytic Cysteine persulfide intermediate.

This sequence belongs to the TrhO family.

It catalyses the reaction uridine(34) in tRNA + AH2 + O2 = 5-hydroxyuridine(34) in tRNA + A + H2O. Its function is as follows. Catalyzes oxygen-dependent 5-hydroxyuridine (ho5U) modification at position 34 in tRNAs. The chain is tRNA uridine(34) hydroxylase from Agrobacterium fabrum (strain C58 / ATCC 33970) (Agrobacterium tumefaciens (strain C58)).